A 378-amino-acid polypeptide reads, in one-letter code: MTIGNFRPATVLIDETAILHNIQHEVARLKKQTQLFAVVKADAYGHGMLRVARVAKAAGATGFCVAILDEALGLRKADYSEPVLVLGIVPSQYAAIAAAQTISLPVSSTEWLEQALPVLEAQPELPPLRIHLALDTGMGRIGFTEDQALKTAVAFVEAHPKQFVIEGVFTHFATADAPDDTYFKQQVNKFNHLVNLLPSRPRYVHVSNSATSLWHAACNGNMIRYGVAIYGLNPSGDAIPTTPFPLEPALSLESELTYCKQVHAGDGISYGVTYRAKGDEFIGTVPIGYADGWLRRLQGFHVLVDGQYCEIVGRICMDQFMIRLPKAYPAGTKVVLVGQSGDQEITLLDVAKYSKTIHYEIACNLTPRLKRQSVNPVD.

Catalysis depends on lysine 40, which acts as the Proton acceptor; specific for D-alanine. Lysine 40 carries the post-translational modification N6-(pyridoxal phosphate)lysine. Arginine 140 contacts substrate. Tyrosine 270 serves as the catalytic Proton acceptor; specific for L-alanine. Methionine 317 contacts substrate.

Belongs to the alanine racemase family. The cofactor is pyridoxal 5'-phosphate.

The catalysed reaction is L-alanine = D-alanine. The protein operates within amino-acid biosynthesis; D-alanine biosynthesis; D-alanine from L-alanine: step 1/1. Catalyzes the interconversion of L-alanine and D-alanine. May also act on other amino acids. The chain is Alanine racemase (alr) from Lacticaseibacillus casei (strain BL23) (Lactobacillus casei).